A 1979-amino-acid polypeptide reads, in one-letter code: Myosin-11 (1979 aa).

The residue at position 2 (Ser-2) is a Blocked amino end (Ser). Positions 30 to 80 (SAKKLVWVPSEKHGFEAASIKEEKGDEVTVELQENGKKVTLSKDDIQKMNP) constitute a Myosin N-terminal SH3-like domain. In terms of domain architecture, Myosin motor spans 84–789 (SKVEDMAELT…VLAHLEEERD (706 aa)). Lys-128 is modified (N6,N6,N6-trimethyllysine). 177–184 (GESGAGKT) serves as a coordination point for ATP. Actin-binding regions lie at residues 667–689 (LTKL…IPNH) and 768–782 (RIGQ…GVLA). An IQ domain is found at 792–821 (ITDVIIAFQAQCRGYLARKAFAKRQQQLTA). The tract at residues 850-1979 (LLQVTRQEEE…DGDFNGKASE (1130 aa)) is rodlike tail (S2 and LMM domains). Residues 850–1979 (LLQVTRQEEE…DGDFNGKASE (1130 aa)) are a coiled coil. 3 disordered regions span residues 1130–1150 (QEDL…KRDL), 1709–1736 (RKQA…LQDE), and 1891–1979 (QLEE…KASE). Positions 1135–1150 (SEKAARNKAEKQKRDL) are enriched in basic and acidic residues. The segment covering 1968–1979 (GRDGDFNGKASE) has biased composition (basic and acidic residues).

It belongs to the TRAFAC class myosin-kinesin ATPase superfamily. Myosin family. Muscle myosin is a hexameric protein that consists of 2 heavy chain subunits (MHC), 2 alkali light chain subunits (MLC) and 2 regulatory light chain subunits (MLC-2).

It is found in the cytoplasm. It localises to the myofibril. Its function is as follows. Muscle contraction. The chain is Myosin-11 (MYH11) from Gallus gallus (Chicken).